The following is a 100-amino-acid chain: Small ribosomal subunit protein uS14c (100 aa).

It belongs to the universal ribosomal protein uS14 family. Part of the 30S ribosomal subunit.

The protein resides in the plastid. It is found in the chloroplast. Binds 16S rRNA, required for the assembly of 30S particles. The protein is Small ribosomal subunit protein uS14c of Oltmannsiellopsis viridis (Marine flagellate).